The sequence spans 104 residues: Urease subunit beta (104 aa).

It belongs to the urease beta subunit family. As to quaternary structure, heterotrimer of UreA (gamma), UreB (beta) and UreC (alpha) subunits. Three heterotrimers associate to form the active enzyme.

Its subcellular location is the cytoplasm. It catalyses the reaction urea + 2 H2O + H(+) = hydrogencarbonate + 2 NH4(+). The protein operates within nitrogen metabolism; urea degradation; CO(2) and NH(3) from urea (urease route): step 1/1. In Methylocella silvestris (strain DSM 15510 / CIP 108128 / LMG 27833 / NCIMB 13906 / BL2), this protein is Urease subunit beta.